The sequence spans 121 residues: Small ribosomal subunit protein uS13 (121 aa).

The interval 97-121 (VRGQRTRTNARTRRGARKTVAGKKK) is disordered. The span at 100-121 (QRTRTNARTRRGARKTVAGKKK) shows a compositional bias: basic residues.

Belongs to the universal ribosomal protein uS13 family. In terms of assembly, part of the 30S ribosomal subunit. Forms a loose heterodimer with protein S19. Forms two bridges to the 50S subunit in the 70S ribosome.

Its function is as follows. Located at the top of the head of the 30S subunit, it contacts several helices of the 16S rRNA. In the 70S ribosome it contacts the 23S rRNA (bridge B1a) and protein L5 of the 50S subunit (bridge B1b), connecting the 2 subunits; these bridges are implicated in subunit movement. Contacts the tRNAs in the A and P-sites. The sequence is that of Small ribosomal subunit protein uS13 from Parasynechococcus marenigrum (strain WH8102).